We begin with the raw amino-acid sequence, 121 residues long: Small ribosomal subunit protein uS13 (121 aa).

The tract at residues 92-121 (HKAGLPVRGQKTHSNARTRKGPRLTKIKKR) is disordered. A compositionally biased stretch (basic residues) spans 101–121 (QKTHSNARTRKGPRLTKIKKR).

Belongs to the universal ribosomal protein uS13 family. In terms of assembly, part of the 30S ribosomal subunit. Forms a loose heterodimer with protein S19. Forms two bridges to the 50S subunit in the 70S ribosome.

Its function is as follows. Located at the top of the head of the 30S subunit, it contacts several helices of the 16S rRNA. In the 70S ribosome it contacts the 23S rRNA (bridge B1a) and protein L5 of the 50S subunit (bridge B1b), connecting the 2 subunits; these bridges are implicated in subunit movement. Contacts the tRNAs in the A and P-sites. This chain is Small ribosomal subunit protein uS13, found in Petrotoga mobilis (strain DSM 10674 / SJ95).